Reading from the N-terminus, the 409-residue chain is Lipoyl synthase, mitochondrial (409 aa).

The segment at 21–41 (QQQVPPSEEPRNESGAANPPL) is disordered. The [4Fe-4S] cluster site is built by Cys-125, Cys-130, Cys-136, Cys-159, Cys-163, Cys-166, and Ser-375. The region spanning 142–364 (EEGDGTATAT…EKEALDMGFL (223 aa)) is the Radical SAM core domain.

This sequence belongs to the radical SAM superfamily. Lipoyl synthase family. Requires [4Fe-4S] cluster as cofactor.

Its subcellular location is the mitochondrion. The catalysed reaction is [[Fe-S] cluster scaffold protein carrying a second [4Fe-4S](2+) cluster] + N(6)-octanoyl-L-lysyl-[protein] + 2 oxidized [2Fe-2S]-[ferredoxin] + 2 S-adenosyl-L-methionine + 4 H(+) = [[Fe-S] cluster scaffold protein] + N(6)-[(R)-dihydrolipoyl]-L-lysyl-[protein] + 4 Fe(3+) + 2 hydrogen sulfide + 2 5'-deoxyadenosine + 2 L-methionine + 2 reduced [2Fe-2S]-[ferredoxin]. It participates in protein modification; protein lipoylation via endogenous pathway; protein N(6)-(lipoyl)lysine from octanoyl-[acyl-carrier-protein]: step 2/2. Its function is as follows. Catalyzes the radical-mediated insertion of two sulfur atoms into the C-6 and C-8 positions of the octanoyl moiety bound to the lipoyl domains of lipoate-dependent enzymes, thereby converting the octanoylated domains into lipoylated derivatives. This chain is Lipoyl synthase, mitochondrial, found in Trypanosoma brucei gambiense (strain MHOM/CI/86/DAL972).